Reading from the N-terminus, the 158-residue chain is Nascent polypeptide-associated complex subunit beta (158 aa).

Disordered regions lie at residues 1 to 40 and 119 to 158; these read MDQA…DKKL and ESYQ…SKVE. Residues 16 to 31 are compositionally biased toward basic residues; it reads GKGKGTPRRKTKKVHK. The region spanning 34–99 is the NAC-A/B domain; that stretch reads GTDDKKLQTS…GEDKELTELV (66 aa). Over residues 137–152 the composition is skewed to acidic residues; the sequence is DDDDDDEIPDLVEGEN.

The protein belongs to the NAC-beta family. As to quaternary structure, part of the nascent polypeptide-associated complex (NAC), consisting of EGD2 and EGD1. NAC associates with ribosomes via EGD1.

It localises to the cytoplasm. Its subcellular location is the nucleus. Component of the nascent polypeptide-associated complex (NAC), a dynamic component of the ribosomal exit tunnel, protecting the emerging polypeptides from interaction with other cytoplasmic proteins to ensure appropriate nascent protein targeting. The NAC complex also promotes mitochondrial protein import by enhancing productive ribosome interactions with the outer mitochondrial membrane and blocks the inappropriate interaction of ribosomes translating non-secretory nascent polypeptides with translocation sites in the membrane of the endoplasmic reticulum. EGD1 may act as a transcription factor that exert a negative effect on the expression of several genes that are transcribed by RNA polymerase II. This chain is Nascent polypeptide-associated complex subunit beta (EGD1), found in Ajellomyces capsulatus (strain NAm1 / WU24) (Darling's disease fungus).